Consider the following 532-residue polypeptide: Protoporphyrinogen oxidase (532 aa).

Residues 9-14 (GSGISG), I289, and 511-513 (VGI) contribute to the FAD site.

This sequence belongs to the protoporphyrinogen/coproporphyrinogen oxidase family. Protoporphyrinogen oxidase subfamily. Requires FAD as cofactor.

The protein resides in the mitochondrion. The catalysed reaction is protoporphyrinogen IX + 3 O2 = protoporphyrin IX + 3 H2O2. It functions in the pathway porphyrin-containing compound metabolism; protoporphyrin-IX biosynthesis; protoporphyrin-IX from protoporphyrinogen-IX: step 1/1. Functionally, catalyzes the 6-electron oxidation of protoporphyrinogen-IX to form protoporphyrin-IX. This is Protoporphyrinogen oxidase (ppox) from Dictyostelium discoideum (Social amoeba).